The following is a 423-amino-acid chain: Glutamine synthetase, chloroplastic (423 aa).

A chloroplast-targeting transit peptide spans 1 to 51 (MAQAVVPAMQCRVGVKAAAGRVWSAGRTRTGRGGASPGFKVMAVSTGSTGV). A GS beta-grasp domain is found at 70–150 (VIAEYIWVGG…VICDTYTPQG (81 aa)). Positions 89–115 (RTISKPVEDPSELPKWNYDGSSTGQAP) are disordered. Residues 154–423 (PTNKRHRAAQ…LAAKKLALKV (270 aa)) enclose the GS catalytic domain.

It belongs to the glutamine synthetase family. Homooctamer.

The protein resides in the plastid. It is found in the chloroplast. It catalyses the reaction L-glutamate + NH4(+) + ATP = L-glutamine + ADP + phosphate + H(+). Functionally, the light-modulated chloroplast enzyme, encoded by a nuclear gene and expressed primarily in leaves, is responsible for the reassimilation of the ammonia generated by photorespiration. The sequence is that of Glutamine synthetase, chloroplastic (GLN2) from Zea mays (Maize).